Reading from the N-terminus, the 394-residue chain is Elongation factor Tu (394 aa).

The region spanning 10–204 (KPHINVGTIG…ALDKYIPEPQ (195 aa)) is the tr-type G domain. The tract at residues 19–26 (GHVDHGKT) is G1. 19 to 26 (GHVDHGKT) provides a ligand contact to GTP. Mg(2+) is bound at residue T26. The tract at residues 60–64 (GITIN) is G2. Positions 81–84 (DCPG) are G3. Residues 81–85 (DCPGH) and 136–139 (NKCD) contribute to the GTP site. A G4 region spans residues 136-139 (NKCD). Residues 174 to 176 (SAL) form a G5 region.

The protein belongs to the TRAFAC class translation factor GTPase superfamily. Classic translation factor GTPase family. EF-Tu/EF-1A subfamily. Monomer.

It localises to the cytoplasm. It catalyses the reaction GTP + H2O = GDP + phosphate + H(+). Its function is as follows. GTP hydrolase that promotes the GTP-dependent binding of aminoacyl-tRNA to the A-site of ribosomes during protein biosynthesis. This Hamiltonella defensa subsp. Acyrthosiphon pisum (strain 5AT) protein is Elongation factor Tu.